The sequence spans 94 residues: Co-chaperonin GroES (94 aa).

It belongs to the GroES chaperonin family. As to quaternary structure, heptamer of 7 subunits arranged in a ring. Interacts with the chaperonin GroEL.

It localises to the cytoplasm. In terms of biological role, together with the chaperonin GroEL, plays an essential role in assisting protein folding. The GroEL-GroES system forms a nano-cage that allows encapsulation of the non-native substrate proteins and provides a physical environment optimized to promote and accelerate protein folding. GroES binds to the apical surface of the GroEL ring, thereby capping the opening of the GroEL channel. The protein is Co-chaperonin GroES of Clostridioides difficile (Peptoclostridium difficile).